The primary structure comprises 253 residues: Protein C1orf43 homolog (253 aa).

Residues 11-31 (VNVVLVMAYGSLVFVLLFIFV) form a helical membrane-spanning segment. The disordered stretch occupies residues 194–213 (SGSSQRQHQSAAKDLTQSPE).

The protein localises to the membrane. It localises to the golgi apparatus. It is found in the mitochondrion. General regulator of phagocytosis. Required to uptake Gram negative bacterium by macrophages. This is Protein C1orf43 homolog from Bos taurus (Bovine).